A 901-amino-acid polypeptide reads, in one-letter code: HTH-type transcriptional regulator MalT (901 aa).

39–46 (SPAGYGKT) provides a ligand contact to ATP. The HTH luxR-type domain occupies 829–894 (ELIRTSPLTQ…AAVQHAQKLL (66 aa)). A DNA-binding region (H-T-H motif) is located at residues 853 to 872 (NEQIAGELEVAATTIKTHIR).

Belongs to the MalT family. Monomer in solution. Oligomerizes to an active state in the presence of the positive effectors ATP and maltotriose.

With respect to regulation, activated by ATP and maltotriose, which are both required for DNA binding. In terms of biological role, positively regulates the transcription of the maltose regulon whose gene products are responsible for uptake and catabolism of malto-oligosaccharides. Specifically binds to the promoter region of its target genes, recognizing a short DNA motif called the MalT box. This Escherichia coli (strain 55989 / EAEC) protein is HTH-type transcriptional regulator MalT.